Reading from the N-terminus, the 600-residue chain is Elongation factor 4 (600 aa).

A tr-type G domain is found at 5–187 (KYIRNFSIVA…EIVEKIPAPE (183 aa)). Residues 17–22 (DHGKST) and 134–137 (NKVD) each bind GTP.

The protein belongs to the TRAFAC class translation factor GTPase superfamily. Classic translation factor GTPase family. LepA subfamily.

It is found in the cell membrane. The enzyme catalyses GTP + H2O = GDP + phosphate + H(+). Its function is as follows. Required for accurate and efficient protein synthesis under certain stress conditions. May act as a fidelity factor of the translation reaction, by catalyzing a one-codon backward translocation of tRNAs on improperly translocated ribosomes. Back-translocation proceeds from a post-translocation (POST) complex to a pre-translocation (PRE) complex, thus giving elongation factor G a second chance to translocate the tRNAs correctly. Binds to ribosomes in a GTP-dependent manner. The polypeptide is Elongation factor 4 (Clostridium perfringens (strain 13 / Type A)).